Consider the following 126-residue polypeptide: Small ribosomal subunit protein uS13 (126 aa).

The segment at 98–126 (PVRGQSTKNNARTRKGRKKTVANKKKATK) is disordered. Over residues 108–126 (ARTRKGRKKTVANKKKATK) the composition is skewed to basic residues.

Belongs to the universal ribosomal protein uS13 family. In terms of assembly, part of the 30S ribosomal subunit. Forms a loose heterodimer with protein S19. Forms two bridges to the 50S subunit in the 70S ribosome.

Its function is as follows. Located at the top of the head of the 30S subunit, it contacts several helices of the 16S rRNA. In the 70S ribosome it contacts the 23S rRNA (bridge B1a) and protein L5 of the 50S subunit (bridge B1b), connecting the 2 subunits; these bridges are implicated in subunit movement. Contacts the tRNAs in the A and P-sites. In Bacteroides fragilis (strain ATCC 25285 / DSM 2151 / CCUG 4856 / JCM 11019 / LMG 10263 / NCTC 9343 / Onslow / VPI 2553 / EN-2), this protein is Small ribosomal subunit protein uS13.